Consider the following 334-residue polypeptide: Spermidine synthase 1 (334 aa).

Residues 1-16 (MDAKETSATDLKRPRE) are compositionally biased toward basic and acidic residues. A disordered region spans residues 1–35 (MDAKETSATDLKRPREEDDNGGAATMETENGDQKK). Residues 45–282 (PGWFSEMSPM…GVIGFMLCST (238 aa)) enclose the PABS domain. An S-adenosyl 3-(methylsulfanyl)propylamine-binding site is contributed by Q76. Y106 lines the putrescine pocket. S-adenosyl 3-(methylsulfanyl)propylamine-binding positions include Q107, D131, E151, 182-183 (DG), and D201. The active-site Proton acceptor is the D201. Putrescine contacts are provided by residues 201–204 (DSSD) and Y270.

This sequence belongs to the spermidine/spermine synthase family. Homotetramer and heterodimer. Component of a multiprotein complex. Interacts with SPMS and SPDSYN2.

It carries out the reaction S-adenosyl 3-(methylsulfanyl)propylamine + putrescine = S-methyl-5'-thioadenosine + spermidine + H(+). It participates in amine and polyamine biosynthesis; spermidine biosynthesis; spermidine from putrescine: step 1/1. This is Spermidine synthase 1 (SPDSYN1) from Arabidopsis thaliana (Mouse-ear cress).